A 1197-amino-acid polypeptide reads, in one-letter code: Transient receptor potential cation channel subfamily A member 1 (1197 aa).

Residues 1–753 lie on the Cytoplasmic side of the membrane; sequence MTSGDKETPK…KWNSYGKYFH (753 aa). ANK repeat units lie at residues 89–118, 122–151, 155–184, 190–219, 224–253, 265–294, 298–327, 336–365, 369–398, 443–472, 476–505, 512–541, 544–574, and 578–607; these read KGRT…DFNA, AGNT…DTGV, KKQA…VIDI, HGRT…ACPR, NGYY…QRGC, EGNV…KIST, DLST…MEKR, QKMT…DINA, EHRS…CISV, MGCS…CINL, NNES…GSFI, AGMT…LLHR, TGRN…LLDQ, and DGNT…KLVY. Residues 754-774 form a helical membrane-spanning segment; it reads LANLLIYSIFLVFVTIYSSLM. Over 775–827 the chain is Extracellular; that stretch reads MNNIELKAGDNKTMSQYCNMGWEQLTMNLSQNPSVASQIRLDSCEERINRTTA. N-linked (GlcNAc...) asparagine glycans are attached at residues Asn785, Asn802, and Asn823. A helical membrane pass occupies residues 828–848; that stretch reads ILFCAVVIVVYILLNSMRELI. Residues 849–856 are Cytoplasmic-facing; that stretch reads QIYQQKLH. The helical transmembrane segment at 857–877 threads the bilayer; it reads YILETVNLISWVLYISALVMV. Over 878–889 the chain is Extracellular; that stretch reads TPAFQPDGGINT. Residues 890 to 910 form a helical membrane-spanning segment; that stretch reads IHYSAASIAVFLSWFRLLLFL. At 911 to 932 the chain is on the cytoplasmic side; the sequence is QRFDQVGIYVVMFLEILQTLIK. Residues 933 to 953 form a helical membrane-spanning segment; that stretch reads VLMVFSILIIAFGLAFYILLS. Over 954 to 968 the chain is Extracellular; that stretch reads KIIDPQPNHLSFSNI. The pore-forming intramembrane region spans 969–989; the sequence is PMSLLRTFSMMLGELDFVGTY. At 990–1004 the chain is on the extracellular side; it reads VNTYYRDQLKVPMTS. The helical transmembrane segment at 1005–1025 threads the bilayer; that stretch reads FLILSVFMILMPILLMNLLIG. The Cytoplasmic portion of the chain corresponds to 1026–1197; sequence LAVGDIESVR…RAALSFNKSM (172 aa).

This sequence belongs to the transient receptor (TC 1.A.4) family. In terms of assembly, homotetramer.

The protein resides in the cell membrane. Essential for thermotaxis by sensing environmental temperature. Receptor-activated non-selective cation channel involved in detection of sensations such as temperature. Involved in heat nociception by being activated by warm temperature of about 24-29 degrees Celsius. The protein is Transient receptor potential cation channel subfamily A member 1 (TrpA1) of Drosophila melanogaster (Fruit fly).